Reading from the N-terminus, the 307-residue chain is Urease accessory protein UreD (307 aa).

The protein belongs to the UreD family. In terms of assembly, ureD, UreF and UreG form a complex that acts as a GTP-hydrolysis-dependent molecular chaperone, activating the urease apoprotein by helping to assemble the nickel containing metallocenter of UreC. The UreE protein probably delivers the nickel.

The protein localises to the cytoplasm. Its function is as follows. Required for maturation of urease via the functional incorporation of the urease nickel metallocenter. The chain is Urease accessory protein UreD from Prochlorococcus marinus (strain NATL1A).